The sequence spans 201 residues: uncharacterized protein (201 aa).

This is an uncharacterized protein from Saccharomyces cerevisiae (strain ATCC 204508 / S288c) (Baker's yeast).